We begin with the raw amino-acid sequence, 346 residues long: GTP-binding RHO-like protein (346 aa).

Basic residues predominate over residues Met1–Ser10. Residues Met1 to Glu25 are disordered. Over residues Pro16–Glu25 the composition is skewed to polar residues. Gly82 to Thr89 serves as a coordination point for GTP. Residues Tyr104–Tyr112 carry the Effector region motif. GTP is bound by residues Asp130–Gln134 and Thr188–Asp191. A disordered region spans residues Leu259 to Asp294. Cysteine methyl ester is present on Cys343. Residue Cys343 is the site of S-geranylgeranyl cysteine attachment. Positions Val344–Leu346 are cleaved as a propeptide — removed in mature form.

It belongs to the small GTPase superfamily. Rho family.

It localises to the cell membrane. This is GTP-binding RHO-like protein (CRL1) from Candida albicans (strain WO-1) (Yeast).